Reading from the N-terminus, the 54-residue chain is MKKYQCIVCGWIYDEAEGWPQDGIAPGTKWEDIPDDWTCPDCGVSKVDFEMIEV.

In terms of domain architecture, Rubredoxin-like spans 1 to 54 (MKKYQCIVCGWIYDEAEGWPQDGIAPGTKWEDIPDDWTCPDCGVSKVDFEMIEV). Fe cation is bound by residues Cys6, Cys9, Cys39, and Cys42.

It belongs to the rubredoxin family. Fe(3+) serves as cofactor.

It is found in the cytoplasm. The protein operates within hydrocarbon metabolism; alkane degradation. Its function is as follows. Involved in the hydrocarbon hydroxylating system, which transfers electrons from NADH to rubredoxin reductase and then through rubredoxin to alkane 1 monooxygenase. The polypeptide is Rubredoxin (rubA) (Acinetobacter baylyi (strain ATCC 33305 / BD413 / ADP1)).